A 280-amino-acid chain; its full sequence is Undecaprenyl-diphosphatase (280 aa).

A run of 8 helical transmembrane segments spans residues 1–21, 40–60, 89–109, 116–136, 146–166, 191–211, 227–247, and 260–280; these read MEWI…FLPI, GAAF…VFFW, WLVV…QNAI, LWIV…ADAV, LTVK…IPGV, FLLA…KIVA, LATV…LKFI, and IALG…ATLS.

It belongs to the UppP family.

It localises to the cell membrane. It catalyses the reaction di-trans,octa-cis-undecaprenyl diphosphate + H2O = di-trans,octa-cis-undecaprenyl phosphate + phosphate + H(+). In terms of biological role, catalyzes the dephosphorylation of undecaprenyl diphosphate (UPP). Confers resistance to bacitracin. In Renibacterium salmoninarum (strain ATCC 33209 / DSM 20767 / JCM 11484 / NBRC 15589 / NCIMB 2235), this protein is Undecaprenyl-diphosphatase.